We begin with the raw amino-acid sequence, 72 residues long: UPF0270 protein YheU (72 aa).

This sequence belongs to the UPF0270 family.

This Escherichia coli (strain ATCC 8739 / DSM 1576 / NBRC 3972 / NCIMB 8545 / WDCM 00012 / Crooks) protein is UPF0270 protein YheU.